The primary structure comprises 378 residues: Chaperone protein DnaJ (378 aa).

The region spanning aspartate 3–glycine 67 is the J domain. A CR-type zinc finger spans residues glycine 133–arginine 215. Cysteine 146, cysteine 149, cysteine 163, cysteine 166, cysteine 189, cysteine 192, cysteine 203, and cysteine 206 together coordinate Zn(2+). 4 CXXCXGXG motif repeats span residues cysteine 146–glycine 153, cysteine 163–glycine 170, cysteine 189–glycine 196, and cysteine 203–glycine 210.

Belongs to the DnaJ family. Homodimer. Requires Zn(2+) as cofactor.

It localises to the cytoplasm. Participates actively in the response to hyperosmotic and heat shock by preventing the aggregation of stress-denatured proteins and by disaggregating proteins, also in an autonomous, DnaK-independent fashion. Unfolded proteins bind initially to DnaJ; upon interaction with the DnaJ-bound protein, DnaK hydrolyzes its bound ATP, resulting in the formation of a stable complex. GrpE releases ADP from DnaK; ATP binding to DnaK triggers the release of the substrate protein, thus completing the reaction cycle. Several rounds of ATP-dependent interactions between DnaJ, DnaK and GrpE are required for fully efficient folding. Also involved, together with DnaK and GrpE, in the DNA replication of plasmids through activation of initiation proteins. In Prochlorococcus marinus (strain MIT 9313), this protein is Chaperone protein DnaJ.